We begin with the raw amino-acid sequence, 570 residues long: Methionine--tRNA ligase (570 aa).

Positions 11 to 21 match the 'HIGH' region motif; sequence PYVQTVPHLGN. 4 residues coordinate Zn(2+): C143, C146, C156, and C159. A 'KMSKS' region motif is present at residues 333–337; the sequence is KFSKS. Residue K336 coordinates ATP.

The protein belongs to the class-I aminoacyl-tRNA synthetase family. MetG type 1 subfamily. It depends on Zn(2+) as a cofactor.

Its subcellular location is the cytoplasm. It carries out the reaction tRNA(Met) + L-methionine + ATP = L-methionyl-tRNA(Met) + AMP + diphosphate. Its function is as follows. Is required not only for elongation of protein synthesis but also for the initiation of all mRNA translation through initiator tRNA(fMet) aminoacylation. The chain is Methionine--tRNA ligase from Pyrobaculum aerophilum (strain ATCC 51768 / DSM 7523 / JCM 9630 / CIP 104966 / NBRC 100827 / IM2).